A 709-amino-acid polypeptide reads, in one-letter code: Acyl-coenzyme A oxidase 4 (709 aa).

A compositionally biased stretch (polar residues) spans 1–12 (MTFTKKNVSVSQ). A disordered region spans residues 1-29 (MTFTKKNVSVSQGPDPRSSIQKERDSSKW).

Belongs to the acyl-CoA oxidase family. Homooctamer. FAD serves as cofactor.

The protein resides in the peroxisome. It catalyses the reaction a 2,3-saturated acyl-CoA + O2 = a (2E)-enoyl-CoA + H2O2. The protein operates within lipid metabolism; peroxisomal fatty acid beta-oxidation. This chain is Acyl-coenzyme A oxidase 4 (POX4), found in Candida tropicalis (Yeast).